The primary structure comprises 756 residues: Conserved oligomeric Golgi complex subunit 2 (756 aa).

Positions 62–82 (RSELRSHLASLNRELVDLINR) form a coiled coil. The segment at 173-199 (WQNEDANSMGRSSMNDENSTQQDGTTM) is disordered.

The protein belongs to the COG2 family. As to quaternary structure, homodimer. Component of the conserved oligomeric Golgi complex which is composed of eight different subunits and is required for normal Golgi morphology and localization. Binds to COG3 and COG4. Interacts with FPP3/VETH1 and FPP2/VETH2; this interaction promotes the association between cortical microtubules and EXO70A1. Binds to SEC15B, and, possibly, with EXO70A1, SEC3A and SEC10A.

The protein localises to the golgi apparatus membrane. Functionally, required for normal Golgi morphology and function. Ensures, when in complex with FPP3/VETH1 and FPP2/VETH2, the correct secondary cell wall (SCW) deposition pattern by recruiting exocyst components to cortical microtubules in xylem cells during secondary cell wall deposition. The protein is Conserved oligomeric Golgi complex subunit 2 of Arabidopsis thaliana (Mouse-ear cress).